Reading from the N-terminus, the 32-residue chain is SYVITTPKMWVMPYGCGEQNMVNFAPNIFIME.

The isoglutamyl cysteine thioester (Cys-Gln) cross-link spans C16–Q19.

This sequence belongs to the protease inhibitor I39 (alpha-2-macroglobulin) family. Homodimer; disulfide-linked.

Its subcellular location is the secreted. Its function is as follows. Is able to inhibit all four classes of proteinases by a unique 'trapping' mechanism. This protein has a peptide stretch, called the 'bait region' which contains specific cleavage sites for different proteinases. When a proteinase cleaves the bait region, a conformational change is induced in the protein which traps the proteinase. The entrapped enzyme remains active against low molecular weight substrates (activity against high molecular weight substrates is greatly reduced). Following cleavage in the bait region a thioester bond is hydrolyzed and mediates the covalent binding of the protein to the proteinase. The polypeptide is Alpha-2-macroglobulin homolog (Pacifastacus leniusculus (Signal crayfish)).